The primary structure comprises 188 residues: Large ribosomal subunit protein uL10 (188 aa).

The protein belongs to the universal ribosomal protein uL10 family. In terms of assembly, part of the ribosomal stalk of the 50S ribosomal subunit. The N-terminus interacts with L11 and the large rRNA to form the base of the stalk. The C-terminus forms an elongated spine to which L12 dimers bind in a sequential fashion forming a multimeric L10(L12)X complex.

Functionally, forms part of the ribosomal stalk, playing a central role in the interaction of the ribosome with GTP-bound translation factors. The polypeptide is Large ribosomal subunit protein uL10 (Crocosphaera subtropica (strain ATCC 51142 / BH68) (Cyanothece sp. (strain ATCC 51142))).